The chain runs to 156 residues: Transcription elongation factor GreA (156 aa).

The stretch at 6-75 (IYLTKEGYEK…ELENMLSKAE (70 aa)) forms a coiled coil.

This sequence belongs to the GreA/GreB family.

Functionally, necessary for efficient RNA polymerase transcription elongation past template-encoded arresting sites. The arresting sites in DNA have the property of trapping a certain fraction of elongating RNA polymerases that pass through, resulting in locked ternary complexes. Cleavage of the nascent transcript by cleavage factors such as GreA or GreB allows the resumption of elongation from the new 3'terminus. GreA releases sequences of 2 to 3 nucleotides. In Thermosipho africanus (strain TCF52B), this protein is Transcription elongation factor GreA.